Reading from the N-terminus, the 105-residue chain is Thioredoxin (105 aa).

Residues 2 to 105 enclose the Thioredoxin domain; sequence VKQIESKYAF…KLEATINELI (104 aa). Position 3 is an N6-acetyllysine (lysine 3). Lysine 8 carries the N6-succinyllysine modification. Catalysis depends on nucleophile residues cysteine 32 and cysteine 35. A disulfide bridge connects residues cysteine 32 and cysteine 35. The residue at position 39 (lysine 39) is an N6-acetyllysine. S-nitrosocysteine occurs at positions 62 and 69. Cysteine 73 carries the post-translational modification S-nitrosocysteine; alternate. N6-acetyllysine; alternate is present on lysine 94. The residue at position 94 (lysine 94) is an N6-succinyllysine; alternate.

It belongs to the thioredoxin family. As to quaternary structure, homodimer; disulfide-linked. Interacts with TXNIP through the redox-active site. Interacts with MAP3K5 and CASP3. Interacts with APEX1; the interaction stimulates the FOS/JUN AP-1 DNA-binding activity in a redox-dependent manner. In terms of processing, in the fully reduced protein, both Cys-69 and Cys-73 are nitrosylated in response to nitric oxide (NO). When two disulfide bonds are present in the protein, only Cys-73 is nitrosylated. Cys-73 can serve as donor for nitrosylation of target proteins.

Its subcellular location is the nucleus. It is found in the cytoplasm. The protein localises to the secreted. In terms of biological role, participates in various redox reactions through the reversible oxidation of its active center dithiol to a disulfide and catalyzes dithiol-disulfide exchange reactions. Plays a role in the reversible S-nitrosylation of cysteine residues in target proteins, and thereby contributes to the response to intracellular nitric oxide. Nitrosylates the active site Cys of CASP3 in response to nitric oxide (NO), and thereby inhibits caspase-3 activity. Induces the FOS/JUN AP-1 DNA binding activity in ionizing radiation (IR) cells through its oxidation/reduction status and stimulates AP-1 transcriptional activity. In Ovis aries (Sheep), this protein is Thioredoxin (TXN).